Consider the following 447-residue polypeptide: UDP-glycosyltransferase 76E5 (447 aa).

Residues S272, 324 to 326 (APQ), 341 to 349 (HCGWNSTLE), and 363 to 366 (NGEQ) contribute to the UDP-alpha-D-glucose site.

The protein belongs to the UDP-glycosyltransferase family.

This chain is UDP-glycosyltransferase 76E5 (UGT76E5), found in Arabidopsis thaliana (Mouse-ear cress).